The primary structure comprises 755 residues: Large structural phosphoprotein (755 aa).

2 disordered regions span residues 312–333 (ESSS…IKTE) and 522–555 (QSFD…STKT). Residues 535-555 (PQDQKSIKQKNGNKANSSTKT) are compositionally biased toward polar residues.

Belongs to the herpesviridae large structural phosphoprotein family. Phosphorylated at multiple sites.

Its subcellular location is the virion tegument. This is Large structural phosphoprotein (U11) from Homo sapiens (Human).